A 287-amino-acid chain; its full sequence is PPP2R1A-PPP2R2A-interacting phosphatase regulator 1 (287 aa).

The segment at 1–44 (MAQEKMELDLELPPGTGGSPAEGGGSGGGGGLRRSNSAPLIHGL) is disordered. The segment covering 15-32 (GTGGSPAEGGGSGGGGGL) has biased composition (gly residues). Serine 35 bears the Phosphoserine mark. Residue serine 37 is modified to Phosphoserine; by CHEK1. A Phosphoserine modification is found at serine 45. Threonine 47 is subject to Phosphothreonine. A phosphoserine mark is found at serine 48, serine 62, and serine 76. A Glycyl lysine isopeptide (Lys-Gly) (interchain with G-Cter in SUMO1) cross-link involves residue lysine 89. Serine 143 and serine 147 each carry phosphoserine. Threonine 149 is subject to Phosphothreonine. 2 disordered regions span residues 167–189 (SNGL…RSQS) and 236–287 (GVCV…LSSK). Low complexity-rich tracts occupy residues 178-189 (PTTRFTTRRSQS) and 246-257 (GNSSSAGSSCNS). Phosphoserine occurs at positions 187 and 189. Positions 259–270 (AKVSTTTDSPVS) are enriched in polar residues. Phosphoserine occurs at positions 267, 270, and 276.

Belongs to the FAM122 family. As to quaternary structure, interacts with PPP2CA and PPP2R1A. Interacts (via its N-terminus) with PPP2R2A; the interaction is direct and this interaction inhibits PP2A activity. The CHEK1-mediated Ser-37 phosphorylated form interacts with 14-3-3 proteins. Post-translationally, CHEK1-mediated phosphorylation at Ser-37 negatively regulates its ability to inhibit serine/threonine-protein phosphatase 2A (PP2A) activity. Phosphorylation leads to its release from the PP2A complex and its sequestration by 14-3-3 proteins in the cytoplasm resulting in its inability to translocate to the nucleus, where it otherwise inhibits PP2A.

The protein resides in the nucleus. Its subcellular location is the cytoplasm. Functionally, acts as an inhibitor of serine/threonine-protein phosphatase 2A (PP2A) activity. Inhibits PP2A activity by blocking the substrate binding site on PPP2R2A and the active site of PPP2CA. Potentiates ubiquitin-mediated proteasomal degradation of serine/threonine-protein phosphatase 2A catalytic subunit alpha (PPP2CA). Inhibits PP2A-mediated dephosphorylation of WEE1, promoting ubiquitin-mediated proteolysis of WEE1, thereby releasing G2/M checkpoint. The polypeptide is PPP2R1A-PPP2R2A-interacting phosphatase regulator 1 (Homo sapiens (Human)).